A 353-amino-acid polypeptide reads, in one-letter code: Photosystem II D2 protein (353 aa).

T2 is subject to N-acetylthreonine. Position 2 is a phosphothreonine (T2). A helical transmembrane segment spans residues 41-61 (CAYFALGGWFTGTTFVTSWYT). Residue H118 participates in chlorophyll a binding. Residues 125–141 (GFMLRQFELARSVQLRP) traverse the membrane as a helical segment. Residues Q130 and N143 each contribute to the pheophytin a site. A helical transmembrane segment spans residues 153-166 (VFVSVFLIYPLGQS). Position 198 (H198) interacts with chlorophyll a. The chain crosses the membrane as a helical span at residues 208-228 (AALLCAIHGATVENTLFEDGD). A plastoquinone contacts are provided by H215 and F262. H215 provides a ligand contact to Fe cation. H269 lines the Fe cation pocket. Residues 279-295 (GLWMSAIGVVGLALNLR) form a helical membrane-spanning segment.

The protein belongs to the reaction center PufL/M/PsbA/D family. As to quaternary structure, PSII is composed of 1 copy each of membrane proteins PsbA, PsbB, PsbC, PsbD, PsbE, PsbF, PsbH, PsbI, PsbJ, PsbK, PsbL, PsbM, PsbT, PsbX, PsbY, PsbZ, Psb30/Ycf12, at least 3 peripheral proteins of the oxygen-evolving complex and a large number of cofactors. It forms dimeric complexes. It depends on The D1/D2 heterodimer binds P680, chlorophylls that are the primary electron donor of PSII, and subsequent electron acceptors. It shares a non-heme iron and each subunit binds pheophytin, quinone, additional chlorophylls, carotenoids and lipids. There is also a Cl(-1) ion associated with D1 and D2, which is required for oxygen evolution. The PSII complex binds additional chlorophylls, carotenoids and specific lipids. as a cofactor.

The protein resides in the plastid. Its subcellular location is the chloroplast thylakoid membrane. The enzyme catalyses 2 a plastoquinone + 4 hnu + 2 H2O = 2 a plastoquinol + O2. Photosystem II (PSII) is a light-driven water:plastoquinone oxidoreductase that uses light energy to abstract electrons from H(2)O, generating O(2) and a proton gradient subsequently used for ATP formation. It consists of a core antenna complex that captures photons, and an electron transfer chain that converts photonic excitation into a charge separation. The D1/D2 (PsbA/PsbD) reaction center heterodimer binds P680, the primary electron donor of PSII as well as several subsequent electron acceptors. D2 is needed for assembly of a stable PSII complex. The chain is Photosystem II D2 protein from Phalaenopsis aphrodite subsp. formosana (Moth orchid).